Here is an 89-residue protein sequence, read N- to C-terminus: CRISPR-associated endoribonuclease Cas2 2 (89 aa).

Asp-9 contacts Mg(2+).

It belongs to the CRISPR-associated endoribonuclease Cas2 protein family. Homodimer, forms a heterotetramer with a Cas1 homodimer. Mg(2+) is required as a cofactor.

In terms of biological role, CRISPR (clustered regularly interspaced short palindromic repeat), is an adaptive immune system that provides protection against mobile genetic elements (viruses, transposable elements and conjugative plasmids). CRISPR clusters contain sequences complementary to antecedent mobile elements and target invading nucleic acids. CRISPR clusters are transcribed and processed into CRISPR RNA (crRNA). Functions as a ssRNA-specific endoribonuclease. Involved in the integration of spacer DNA into the CRISPR cassette. This chain is CRISPR-associated endoribonuclease Cas2 2, found in Methanospirillum hungatei JF-1 (strain ATCC 27890 / DSM 864 / NBRC 100397 / JF-1).